Reading from the N-terminus, the 385-residue chain is 26S proteasome non-ATPase regulatory subunit 13 (385 aa).

The region spanning 176–347 (EFYKNALMYL…EIIHITWVTP (172 aa)) is the PCI domain.

Belongs to the proteasome subunit S11 family.

Functionally, acts as a regulatory subunit of the 26S proteasome which is involved in the ATP-dependent degradation of ubiquitinated proteins. In Dictyostelium discoideum (Social amoeba), this protein is 26S proteasome non-ATPase regulatory subunit 13 (psmD13).